A 258-amino-acid polypeptide reads, in one-letter code: Small ribosomal subunit protein mS35 (258 aa).

The N-terminal 39 residues, Met1–Arg39, are a transit peptide targeting the mitochondrion.

The protein belongs to the mitochondrion-specific ribosomal protein mS35 family. In terms of assembly, component of the mitochondrial small ribosomal subunit (mt-SSU). Mature yeast 74S mitochondrial ribosomes consist of a small (37S) and a large (54S) subunit. The 37S small subunit contains a 15S ribosomal RNA (15S mt-rRNA) and at least 32 different proteins. The 54S large subunit contains a 21S rRNA (21S mt-rRNA) and at least 45 different proteins.

It is found in the mitochondrion. Functionally, component of the mitochondrial ribosome (mitoribosome), a dedicated translation machinery responsible for the synthesis of mitochondrial genome-encoded proteins, including at least some of the essential transmembrane subunits of the mitochondrial respiratory chain. The mitoribosomes are attached to the mitochondrial inner membrane and translation products are cotranslationally integrated into the membrane. In Schizosaccharomyces pombe (strain 972 / ATCC 24843) (Fission yeast), this protein is Small ribosomal subunit protein mS35 (rsm24).